We begin with the raw amino-acid sequence, 384 residues long: Beta-ureidopropionase (384 aa).

The CN hydrolase domain occupies 72–344 (VHVGLVQNRI…DGLLVAKLDL (273 aa)). Catalysis depends on Glu-119, which acts as the Proton acceptor. Catalysis depends on Lys-196, which acts as the Proton donor. The Nucleophile role is filled by Cys-233. Ser-378 carries the phosphoserine modification.

Belongs to the carbon-nitrogen hydrolase superfamily. BUP family. Homodimer, homotetramer, homooctamer; can also form higher homooligomers.

Its subcellular location is the cytoplasm. The catalysed reaction is 3-(carbamoylamino)propanoate + H2O + 2 H(+) = beta-alanine + NH4(+) + CO2. It carries out the reaction 3-(carbamoylamino)-2-methylpropanoate + H2O + 2 H(+) = (R)-3-amino-2-methylpropanoate + NH4(+) + CO2. The protein operates within amino-acid biosynthesis; beta-alanine biosynthesis. Functionally, catalyzes a late step in pyrimidine degradation. Converts N-carbamoyl-beta-alanine (3-ureidopropanoate) into beta-alanine, ammonia and carbon dioxide. Likewise, converts N-carbamoyl-beta-aminoisobutyrate (3-ureidoisobutyrate) into beta-aminoisobutyrate, ammonia and carbon dioxide. This chain is Beta-ureidopropionase (UPB1), found in Pongo abelii (Sumatran orangutan).